Consider the following 374-residue polypeptide: Multicilin (374 aa).

2 disordered regions span residues 18 to 72 (CPNR…ALPA) and 84 to 105 (CSSF…QSHS). Residues 168–216 (EQYWKEVADQNQRALGDALIENNQLHATLTQKQEEIASLKERNLQLKEL) are a coiled coil. The interval 284-306 (LQSRDPKRLRLQPEPQSLDRRPG) is disordered.

This sequence belongs to the geminin family. In terms of assembly, heterodimer (via coiled-coil domain) with GMNN (via coiled-coil domain); targets GMNN to the nucleus. Can form homodimers (in vitro, via coiled-coil domain), but these are much less stable than the heterodimer formed with GMNN.

Its subcellular location is the nucleus. In terms of biological role, transcription regulator specifically required for multiciliate cell differentiation. Acts in a multiprotein complex containing E2F4 and E2F5 that binds and activates genes required for centriole biogenesis. Required for the deuterosome-mediated acentriolar pathway. Plays a role in mitotic cell cycle progression by promoting cell cycle exit. Modulates GMNN activity by reducing its affinity for CDT1. The polypeptide is Multicilin (MCIDAS) (Bos taurus (Bovine)).